Here is a 138-residue protein sequence, read N- to C-terminus: Large-conductance mechanosensitive channel (138 aa).

The next 2 helical transmembrane spans lie at 19 to 39 and 81 to 101; these read VGVI…GDVI and GSFL…FLVI.

It belongs to the MscL family. In terms of assembly, homopentamer.

The protein resides in the cell inner membrane. In terms of biological role, channel that opens in response to stretch forces in the membrane lipid bilayer. May participate in the regulation of osmotic pressure changes within the cell. This Bradyrhizobium diazoefficiens (strain JCM 10833 / BCRC 13528 / IAM 13628 / NBRC 14792 / USDA 110) protein is Large-conductance mechanosensitive channel.